The primary structure comprises 260 residues: Putative [LysW]-aminoadipate/[LysW]-glutamate kinase (260 aa).

Residues 35-36 (GG), Arg-62, and Asn-162 contribute to the substrate site.

This sequence belongs to the acetylglutamate kinase family. LysZ subfamily.

Its subcellular location is the cytoplasm. It carries out the reaction [amino-group carrier protein]-C-terminal-N-(1,4-dicarboxybutan-1-yl)-L-glutamine + ATP = [amino-group carrier protein]-C-terminal-N-(1-carboxy-5-phosphooxy-5-oxopentan-1-yl)-L-glutamine + ADP. The catalysed reaction is [amino-group carrier protein]-C-terminal-gamma-(L-glutamyl)-L-glutamate + ATP = [amino-group carrier protein]-C-terminal-gamma-(5-phospho-L-glutamyl)-L-glutamate + ADP. Its pathway is amino-acid biosynthesis; L-lysine biosynthesis via AAA pathway; L-lysine from L-alpha-aminoadipate (Thermus route): step 2/5. The protein operates within amino-acid biosynthesis; L-arginine biosynthesis. Its function is as follows. Involved in both the arginine and lysine biosynthetic pathways. Phosphorylates the LysW-bound precursors glutamate (for arginine biosynthesis), respectively alpha-aminoadipate (for lysine biosynthesis). The polypeptide is Putative [LysW]-aminoadipate/[LysW]-glutamate kinase (Pyrobaculum neutrophilum (strain DSM 2338 / JCM 9278 / NBRC 100436 / V24Sta) (Thermoproteus neutrophilus)).